The following is a 661-amino-acid chain: Kyphoscoliosis peptidase (661 aa).

A disordered region spans residues 116 to 137 (GDKNGNMRPRQPGGKDAHAYPW). Catalysis depends on residues cysteine 225, histidine 267, and aspartate 282.

Belongs to the transglutaminase-like superfamily. As to quaternary structure, interacts with IGFN1 and FLNC. As to expression, specifically expressed in skeletal and cardiac muscle.

It is found in the cytoplasm. The protein resides in the cytoskeleton. Its subcellular location is the myofibril. The protein localises to the sarcomere. It localises to the z line. In terms of biological role, probable cytoskeleton-associated protease required for normal muscle growth. Involved in function, maturation and stabilization of the neuromuscular junction. May act by cleaving muscle-specific proteins such as FLNC. The protein is Kyphoscoliosis peptidase of Mus musculus (Mouse).